We begin with the raw amino-acid sequence, 99 residues long: MSSKVERERRKAQLLSQIQQQRLDLSASRREWLETTGAYDRRWNMLLSLRSWALVGSSVMAIWTIRHPNMLVRWARRGFGVWSAWRLVKTTLKQQQLRG.

This is an uncharacterized protein from Escherichia coli (strain K12).